Consider the following 501-residue polypeptide: Cryptochrome-1 (501 aa).

The region spanning 5 to 134 (KKTIVWFRRD…SVQSYNGDLC (130 aa)) is the Photolyase/cryptochrome alpha/beta domain. Residues Tyr231 and 243–247 (TSLLS) each bind FAD. An ATP-binding site is contributed by Arg356. FAD-binding residues include Asp386 and Asp388. Asp405 provides a ligand contact to ATP.

This sequence belongs to the DNA photolyase class-1 family. Homodimer. FAD is required as a cofactor. Requires (6R)-5,10-methylene-5,6,7,8-tetrahydrofolate as cofactor.

In terms of biological role, mediates blue light-induced gene expression in addition to its role in blue light-dependent inhibition of stem growth. The sequence is that of Cryptochrome-1 (PHR1) from Sinapis alba (White mustard).